A 610-amino-acid chain; its full sequence is Oxidoreductase ptaE (610 aa).

The first 20 residues, 1 to 20, serve as a signal peptide directing secretion; sequence MFQSILFLAFYGRPVFGSAA. Plastocyanin-like domains follow at residues 67-181 and 191-344; these read QIIS…HGPS and PWLL…IVRY. N-linked (GlcNAc...) asparagine glycans are attached at residues asparagine 105, asparagine 111, asparagine 262, asparagine 277, asparagine 330, asparagine 356, asparagine 401, asparagine 409, asparagine 427, and asparagine 602. The region spanning 425 to 568 is the Plastocyanin-like 3 domain; sequence YVNWSEPSVK…IAIQFLEQPS (144 aa).

Belongs to the multicopper oxidase family.

It participates in secondary metabolite biosynthesis. In terms of biological role, oxidoreductase; part of the gene cluster that mediates the biosynthesis of pestheic acid, a diphenyl ether which is a biosynthetic precursor of the unique chloropupukeananes. The biosynthesis initiates from condensation of acetate and malonate units catalyzed by the non-reducing PKS ptaA. As the ptaA protein is TE/CLC domain-deficient, hydrolysis and Claisen cyclization of the polyketide could be catalyzed by ptaB containing a beta-lactamase domain. The ptaB protein might hydrolyze the thioester bond between the ACP of ptaA and the intermediate to release atrochrysone carboxylic acid, which is spontaneously dehydrated to form endocrocin anthrone. Endocrocin anthrone is then converted to endocrocin, catalyzed by the anthrone oxygenase ptaC. Spontaneous decarboxylation of endocrocin occurs to generate emodin. An O-methyltransferase (ptaH or ptaI) could methylate emodin to form physcion. PtaJ could then catalyze the oxidative cleavage of physcion, and rotation of the intermediate could then afford desmethylisosulochrin. PtaF, a putative NADH-dependent oxidoreductase, might also participate in the oxidative cleavage step. Desmethylisosulochrin is then transformed by another O-methyltransferase (ptaH or ptaI) to form isosulochrin. Chlorination of isosulochrin by ptaM in the cyclohexadienone B ring then produces chloroisosulochrin. PtaE is responsible for the oxidative coupling reactions of both benzophenones isosulouchrin and chloroisosulochrin to RES-1214-1 and pestheic acid respectively, regardless of chlorination. The sequence is that of Oxidoreductase ptaE from Pestalotiopsis fici (strain W106-1 / CGMCC3.15140).